The following is a 286-amino-acid chain: Hypersensitive-induced response protein 1 (286 aa).

Glycine 2 is lipidated: N-myristoyl glycine. Residues 114–190 (LDDVFEQKND…EKILQIKRAE (77 aa)) adopt a coiled-coil conformation.

As to quaternary structure, self-interacts and forms heteromers. Interacts with NB-LRR class of R proteins before R proteins (e.g. RPS2 or RPM1) are activated by the effectors. Interacts with LRR1.

The protein resides in the cell membrane. Positive regulator of hypersensitive response (HR)-like cell death. May be involved in potassium ion channel regulation. The polypeptide is Hypersensitive-induced response protein 1 (Arabidopsis thaliana (Mouse-ear cress)).